Reading from the N-terminus, the 234-residue chain is Sugar fermentation stimulation protein A (234 aa).

Residues 201-220 (LLSEAQQRGVEILAYKAEIS) constitute a DNA-binding region (H-T-H motif).

Belongs to the SfsA family.

Its function is as follows. Binds to DNA non-specifically. Could be a regulatory factor involved in maltose metabolism. The chain is Sugar fermentation stimulation protein A from Escherichia coli (strain 55989 / EAEC).